The sequence spans 323 residues: Dof zinc finger protein DOF3.6 (323 aa).

A Dof-type zinc finger spans residues leucine 76 to arginine 130. Zn(2+)-binding residues include cysteine 78, cysteine 81, cysteine 103, and cysteine 106. Disordered regions lie at residues valine 121–asparagine 160 and glycine 304–phenylalanine 323. A compositionally biased stretch (basic residues) spans arginine 126–serine 135. A compositionally biased stretch (low complexity) spans lysine 136–serine 159.

Interacts with OBF4. In terms of tissue distribution, predominantly expressed in roots.

It is found in the nucleus. Transcription factor that binds specifically to a 5'-AA[AG]G-3' consensus core sequence. Enhances the DNA binding of OBF transcription factors to OCS elements. The sequence is that of Dof zinc finger protein DOF3.6 (DOF3.6) from Arabidopsis thaliana (Mouse-ear cress).